Here is a 353-residue protein sequence, read N- to C-terminus: UPF0283 membrane protein YcjF (353 aa).

Transmembrane regions (helical) follow at residues 70-90, 100-120, and 213-233; these read MVMGGLALFGASVVGQGVQWT, VALGGCAAGALIIGAGVGSVV, and ESTLMIAVSPLALVDMAFIAW.

This sequence belongs to the UPF0283 family.

The protein localises to the cell inner membrane. The protein is UPF0283 membrane protein YcjF of Shigella boydii serotype 4 (strain Sb227).